Here is a 295-residue protein sequence, read N- to C-terminus: Nitrogenase iron protein 1 (295 aa).

13–20 (GKGGIGKS) contributes to the ATP binding site. Cys101 serves as a coordination point for [4Fe-4S] cluster. The residue at position 104 (Arg104) is an ADP-ribosylarginine; by dinitrogenase reductase ADP-ribosyltransferase. Cys135 is a [4Fe-4S] cluster binding site.

This sequence belongs to the NifH/BchL/ChlL family. Homodimer. It depends on [4Fe-4S] cluster as a cofactor. The reversible ADP-ribosylation of Arg-104 inactivates the nitrogenase reductase and regulates nitrogenase activity.

The enzyme catalyses N2 + 8 reduced [2Fe-2S]-[ferredoxin] + 16 ATP + 16 H2O = H2 + 8 oxidized [2Fe-2S]-[ferredoxin] + 2 NH4(+) + 16 ADP + 16 phosphate + 6 H(+). Functionally, the key enzymatic reactions in nitrogen fixation are catalyzed by the nitrogenase complex, which has 2 components: the iron protein and the molybdenum-iron protein. This is Nitrogenase iron protein 1 (nifH1) from Nostoc sp. (strain PCC 7120 / SAG 25.82 / UTEX 2576).